Reading from the N-terminus, the 273-residue chain is Undecaprenyl-diphosphatase (273 aa).

Helical transmembrane passes span 6–26, 45–65, 90–110, 116–136, 190–210, 222–242, and 252–272; these read SLLI…LPVS, AKTF…VMFW, LTLI…LVFH, LFNP…LIAA, YAAS…ATVL, ADIP…LIAI, and ISFI…YVVF.

The protein belongs to the UppP family.

It is found in the cell inner membrane. It carries out the reaction di-trans,octa-cis-undecaprenyl diphosphate + H2O = di-trans,octa-cis-undecaprenyl phosphate + phosphate + H(+). Functionally, catalyzes the dephosphorylation of undecaprenyl diphosphate (UPP). Confers resistance to bacitracin. This Salmonella paratyphi C (strain RKS4594) protein is Undecaprenyl-diphosphatase.